We begin with the raw amino-acid sequence, 950 residues long: Xylosyltransferase 1 (950 aa).

Residues Met1–Ala17 are Cytoplasmic-facing. A helical; Signal-anchor for type II membrane protein membrane pass occupies residues Leu18 to Leu38. Over His39 to Arg950 the chain is Lumenal. The tract at residues Ala42–Cys246 is disordered. Over residues Pro91 to Pro104 the composition is skewed to low complexity. A compositionally biased stretch (basic and acidic residues) spans Lys134–Glu150. Over residues Val152–Thr161 the composition is skewed to polar residues. Over residues His166–Lys193 the composition is skewed to basic and acidic residues. N-linked (GlcNAc...) asparagine glycosylation is present at Asn215. 4 disulfide bridges follow: Cys246/Cys274, Cys290/Cys531, Cys550/Cys563, and Cys552/Cys561. UDP-alpha-D-xylose is bound by residues Val322, Asp350, and Thr379–Trp381. Asn410 is a glycosylation site (N-linked (GlcNAc...) asparagine). A UDP-alpha-D-xylose-binding site is contributed by Asp483–Trp484. UDP-alpha-D-xylose contacts are provided by residues Ser564 and Arg587–Lys588. 2 cysteine pairs are disulfide-bonded: Cys664–Cys918 and Cys911–Cys924. N-linked (GlcNAc...) asparagine glycosylation occurs at Asn768. The segment at Ser931–Arg950 is disordered.

The protein belongs to the glycosyltransferase 14 family. XylT subfamily. As to quaternary structure, monomer. A divalent metal cation is required as a cofactor. In terms of processing, contains 7 disulfide bonds. Post-translationally, N-glycosylated.

The protein localises to the golgi apparatus membrane. The enzyme catalyses UDP-alpha-D-xylose + L-seryl-[protein] = 3-O-(beta-D-xylosyl)-L-seryl-[protein] + UDP + H(+). Its pathway is glycan metabolism; chondroitin sulfate biosynthesis. It functions in the pathway glycan metabolism; heparan sulfate biosynthesis. Functionally, catalyzes the first step in the biosynthesis of chondroitin sulfate and dermatan sulfate proteoglycans, such as DCN. Transfers D-xylose from UDP-D-xylose to specific serine residues of the core protein. Required for normal maturation of chondrocytes during bone development, normal onset of ossification and normal embryonic and postnatal skeleton development, especially of the long bones. This chain is Xylosyltransferase 1 (XYLT1), found in Canis lupus familiaris (Dog).